We begin with the raw amino-acid sequence, 820 residues long: MNESYQPTLIEQLAQEYWEENETFEVKEDLSREKFYCLSMLPYPSGDLHMGHVRNYTIGDVIARYQIHKGRNVLQPMGWDAFGLPAENAAIQRELPPAEWTRKNIKKMRKQLKQLGFAYDWSREITTCDSTYYRWEQWLFLQLYKKGLAYKKNAIVNWDPVDQTVLANEQIVDGRGWRSGAVVERREISQWFLKITDYSEELLKDLDELKEWPEQVITMQRNWIGQSQGVIINFNLEKGPDKLQVYTTRPDTLMGVTYLAIAPEHPLAKERAKKSKKIAAFLKKCKQTRVAEADIATQEKEGIDSGLFAVHPLSKEKLPIWIANFVLMEYASGVVMAVPAHDERDHEFALKYDLPLKPVIEPADGHDWDYNQAAYTNPGKLINSGSFNDIDSKTAFNVIADYLKNNGAGSRQTHYRLRDWGISRQRYWGTPIPIIYCKTCGTVPVPENQLPVLLPEDIIPTGHGSPLKETASFYKTRCPVCNKPATRETDTMDTFVESSWYYARYSCPDQDKVMLDDRAKYWTPVDQYIGGIEHAVMHLLYARFMHKILRDLGLLNSNEPFIRLLTQGMVLKDGAKMSKSKGNVVTPQSLIKKYGADTVRLFIIFAAPPEQDLEWSDSGVEGAYRFLKKLWGFSYRIKDALLAINQQKERSNYQWEAPEHRQTRQQIHECLQQANIDMERLQFNTVVSAVMKILNILIKLTTDNDAEAHLIREGTGILLRLLSPITPHISHHLWQSLGFGGDILDAPWPRPDPKALQTTELELIVQINGKLRGRIQVPTEASKEIIESTALNQENVQRHLADKKIKKVIVVPKKLINILV.

Positions 42–52 (PYPSGDLHMGH) match the 'HIGH' region motif. Positions 576-580 (KMSKS) match the 'KMSKS' region motif. Lys-579 is a binding site for ATP.

It belongs to the class-I aminoacyl-tRNA synthetase family.

The protein resides in the cytoplasm. It catalyses the reaction tRNA(Leu) + L-leucine + ATP = L-leucyl-tRNA(Leu) + AMP + diphosphate. The sequence is that of Leucine--tRNA ligase from Coxiella burnetii (strain CbuK_Q154) (Coxiella burnetii (strain Q154)).